A 204-amino-acid polypeptide reads, in one-letter code: Guanylate kinase (204 aa).

The Guanylate kinase-like domain maps to glycine 18–lysine 198. Residue alanine 25–serine 32 participates in ATP binding.

This sequence belongs to the guanylate kinase family.

The protein localises to the cytoplasm. The catalysed reaction is GMP + ATP = GDP + ADP. In terms of biological role, essential for recycling GMP and indirectly, cGMP. This chain is Guanylate kinase, found in Bacteroides thetaiotaomicron (strain ATCC 29148 / DSM 2079 / JCM 5827 / CCUG 10774 / NCTC 10582 / VPI-5482 / E50).